The chain runs to 106 residues: uncharacterized protein (106 aa).

It belongs to the HesB/IscA family.

This is an uncharacterized protein from Rhodobacter capsulatus (Rhodopseudomonas capsulata).